The chain runs to 157 residues: UPF0262 protein RHE_CH00582 (157 aa).

It belongs to the UPF0262 family.

In Rhizobium etli (strain ATCC 51251 / DSM 11541 / JCM 21823 / NBRC 15573 / CFN 42), this protein is UPF0262 protein RHE_CH00582.